The primary structure comprises 324 residues: Glyoxylate/hydroxypyruvate reductase B (324 aa).

Catalysis depends on residues arginine 237 and glutamate 266. Histidine 285 functions as the Proton donor in the catalytic mechanism.

This sequence belongs to the D-isomer specific 2-hydroxyacid dehydrogenase family. GhrB subfamily. As to quaternary structure, homodimer.

It localises to the cytoplasm. It catalyses the reaction glycolate + NADP(+) = glyoxylate + NADPH + H(+). The enzyme catalyses (R)-glycerate + NAD(+) = 3-hydroxypyruvate + NADH + H(+). The catalysed reaction is (R)-glycerate + NADP(+) = 3-hydroxypyruvate + NADPH + H(+). Its function is as follows. Catalyzes the NADPH-dependent reduction of glyoxylate and hydroxypyruvate into glycolate and glycerate, respectively. The sequence is that of Glyoxylate/hydroxypyruvate reductase B from Escherichia coli O6:K15:H31 (strain 536 / UPEC).